We begin with the raw amino-acid sequence, 548 residues long: Chaperonin GroEL (548 aa).

Residues 30-33 (TLGP), Lys51, 87-91 (DGTTT), Gly415, 479-481 (NAA), and Asp495 contribute to the ATP site. The tract at residues 525–548 (PKEDKTSDASSSPAGGMGGMGGMM) is disordered. Positions 539–548 (GGMGGMGGMM) are enriched in gly residues.

This sequence belongs to the chaperonin (HSP60) family. Forms a cylinder of 14 subunits composed of two heptameric rings stacked back-to-back. Interacts with the co-chaperonin GroES.

The protein localises to the cytoplasm. The enzyme catalyses ATP + H2O + a folded polypeptide = ADP + phosphate + an unfolded polypeptide.. Its function is as follows. Together with its co-chaperonin GroES, plays an essential role in assisting protein folding. The GroEL-GroES system forms a nano-cage that allows encapsulation of the non-native substrate proteins and provides a physical environment optimized to promote and accelerate protein folding. The chain is Chaperonin GroEL from Buchnera aphidicola subsp. Rhopalosiphum padi.